The sequence spans 390 residues: Succinate--CoA ligase [ADP-forming] subunit beta (390 aa).

Residues 9–244 (KEIFREYGVP…LSEEDPVEVE (236 aa)) enclose the ATP-grasp domain. ATP contacts are provided by residues Lys-46, 53–55 (GRG), Glu-99, Ala-102, and Glu-107. Mg(2+) contacts are provided by Asn-199 and Asp-213. Substrate-binding positions include Asn-264 and 321–323 (GIV).

This sequence belongs to the succinate/malate CoA ligase beta subunit family. In terms of assembly, heterotetramer of two alpha and two beta subunits. The cofactor is Mg(2+).

The enzyme catalyses succinate + ATP + CoA = succinyl-CoA + ADP + phosphate. It catalyses the reaction GTP + succinate + CoA = succinyl-CoA + GDP + phosphate. The protein operates within carbohydrate metabolism; tricarboxylic acid cycle; succinate from succinyl-CoA (ligase route): step 1/1. Functionally, succinyl-CoA synthetase functions in the citric acid cycle (TCA), coupling the hydrolysis of succinyl-CoA to the synthesis of either ATP or GTP and thus represents the only step of substrate-level phosphorylation in the TCA. The beta subunit provides nucleotide specificity of the enzyme and binds the substrate succinate, while the binding sites for coenzyme A and phosphate are found in the alpha subunit. The chain is Succinate--CoA ligase [ADP-forming] subunit beta from Nitratiruptor sp. (strain SB155-2).